The primary structure comprises 119 residues: Flagellar transcriptional regulator FlhD (119 aa).

The protein belongs to the FlhD family. Homodimer; disulfide-linked. Forms a heterohexamer composed of two FlhC and four FlhD subunits. Each FlhC binds a FlhD dimer, forming a heterotrimer, and a hexamer assembles by dimerization of two heterotrimers.

The protein localises to the cytoplasm. Its function is as follows. Functions in complex with FlhC as a master transcriptional regulator that regulates transcription of several flagellar and non-flagellar operons by binding to their promoter region. Activates expression of class 2 flagellar genes, including fliA, which is a flagellum-specific sigma factor that turns on the class 3 genes. Also regulates genes whose products function in a variety of physiological pathways. The polypeptide is Flagellar transcriptional regulator FlhD (Shigella dysenteriae serotype 1 (strain Sd197)).